The sequence spans 2178 residues: Genome polyprotein (2178 aa).

Residues 1–20 (MGAQVSTQKSGSHENQNILT) are disordered. Glycine 2 carries N-myristoyl glycine; by host lipidation. The Cytoplasmic portion of the chain corresponds to 2–1490 (GAQVSTQKSG…AVNQASMIIN (1489 aa)). The amphipathic alpha-helix stretch occupies residues 564-584 (ALTEGLSDELEEVIVEKTKQT). Catalysis depends on for protease 2A activity residues histidine 875 and aspartate 893. Residues cysteine 910 and cysteine 912 each coordinate Zn(2+). Cysteine 964 serves as the catalytic For protease 2A activity. Zn(2+) contacts are provided by cysteine 970 and histidine 972. Residues 1100–1172 (NDGWFRKFND…HDSNPTQEKR (73 aa)) are membrane-binding. An oligomerization region spans residues 1100-1238 (NDGWFRKFND…TPGSGKSLTT (139 aa)). The RNA-binding stretch occupies residues 1121–1125 (ANKIS). In terms of domain architecture, SF3 helicase spans 1204–1360 (KNKITNYMQF…STYTKNGKLN (157 aa)). Zn(2+)-binding residues include cysteine 1368, cysteine 1371, cysteine 1380, and cysteine 1385. The segment at 1368–1385 (CKDCHQPSNFKKCCPLVC) adopts a C4-type zinc-finger fold. Residues 1412 to 1419 (DYKNKVKI) are RNA-binding. Positions 1423-1428 (LEVLFQ) are oligomerization. The stretch at 1491–1506 (TILMFVSTLGIVYVIY) is an intramembrane region. Residues 1507-2178 (KLFAQTQGPY…VLRRRWLDLF (672 aa)) are Cytoplasmic-facing. Tyrosine 1516 is modified (O-(5'-phospho-RNA)-tyrosine). The Peptidase C3 domain maps to 1537–1714 (GPNTEFALSL…FSAQLKKQYF (178 aa)). Active-site for protease 3C activity residues include histidine 1576, glutamate 1607, and cysteine 1682. One can recognise a RdRp catalytic domain in the interval 1946–2059 (HLMAFDYSNF…SYPFELDSNI (114 aa)). Residues aspartate 1951 and aspartate 2045 each coordinate Mg(2+).

It belongs to the picornaviruses polyprotein family. In terms of assembly, interacts with capsid protein VP1 and capsid protein VP3 to form heterotrimeric protomers. As to quaternary structure, interacts with capsid protein VP0, and capsid protein VP3 to form heterotrimeric protomers. Five protomers subsequently associate to form pentamers which serve as building blocks for the capsid. Interacts with capsid protein VP2, capsid protein VP3 and capsid protein VP4 following cleavage of capsid protein VP0. Interacts with capsid protein VP1 and capsid protein VP3 in the mature capsid. In terms of assembly, interacts with capsid protein VP0 and capsid protein VP1 to form heterotrimeric protomers. Five protomers subsequently associate to form pentamers which serve as building blocks for the capsid. Interacts with capsid protein VP4 in the mature capsid. Interacts with protein 2C; this interaction may be important for virion morphogenesis. As to quaternary structure, interacts with capsid protein VP1 and capsid protein VP3. Homodimer. In terms of assembly, homohexamer; forms a hexameric ring structure with 6-fold symmetry characteristic of AAA+ ATPases. Interacts (via N-terminus) with host RTN3 (via reticulon domain); this interaction is important for viral replication. Interacts with capsid protein VP3; this interaction may be important for virion morphogenesis. As to quaternary structure, interacts with protein 3CD. Homodimer. Interacts with host GBF1. Interacts (via GOLD domain) with host ACBD3 (via GOLD domain); this interaction allows the formation of a viral protein 3A/ACBD3 heterotetramer with a 2:2 stoichiometry, which will stimulate the recruitment of host PI4KB in order to synthesize PI4P at the viral RNA replication sites. In terms of assembly, interacts with RNA-directed RNA polymerase. As to quaternary structure, interacts with protein 3AB and with RNA-directed RNA polymerase. Interacts with Viral protein genome-linked and with protein 3CD. Mg(2+) serves as cofactor. Specific enzymatic cleavages in vivo by the viral proteases yield processing intermediates and the mature proteins. In terms of processing, myristoylation is required for the formation of pentamers during virus assembly. Further assembly of 12 pentamers and a molecule of genomic RNA generates the provirion. Post-translationally, during virion maturation, immature virions are rendered infectious following cleavage of VP0 into VP4 and VP2. This maturation seems to be an autocatalytic event triggered by the presence of RNA in the capsid and it is followed by a conformational change infectious virion. Myristoylation is required during RNA encapsidation and formation of the mature virus particle. In terms of processing, VPg is uridylylated by the polymerase into VPg-pUpU. This acts as a nucleotide-peptide primer for the genomic RNA replication.

Its subcellular location is the virion. The protein resides in the host cytoplasm. It is found in the host cytoplasmic vesicle membrane. The protein localises to the host nucleus. The catalysed reaction is a ribonucleoside 5'-triphosphate + H2O = a ribonucleoside 5'-diphosphate + phosphate + H(+). It carries out the reaction Selective cleavage of Tyr-|-Gly bond in the picornavirus polyprotein.. The enzyme catalyses RNA(n) + a ribonucleoside 5'-triphosphate = RNA(n+1) + diphosphate. It catalyses the reaction Selective cleavage of Gln-|-Gly bond in the poliovirus polyprotein. In other picornavirus reactions Glu may be substituted for Gln, and Ser or Thr for Gly.. Its activity is regulated as follows. Replication or transcription is subject to high level of random mutations by the nucleotide analog ribavirin. In terms of biological role, forms an icosahedral capsid of pseudo T=3 symmetry with capsid proteins VP2 and VP3. The capsid is 300 Angstroms in diameter, composed of 60 copies of each capsid protein and enclosing the viral positive strand RNA genome. Capsid protein VP1 mainly forms the vertices of the capsid. Capsid protein VP1 interacts with host cell receptor to provide virion attachment to target host cells. This attachment induces virion internalization. Tyrosine kinases are probably involved in the entry process. After binding to its receptor, the capsid undergoes conformational changes. Capsid protein VP1 N-terminus (that contains an amphipathic alpha-helix) and capsid protein VP4 are externalized. Together, they shape a pore in the host membrane through which viral genome is translocated to host cell cytoplasm. Its function is as follows. Forms an icosahedral capsid of pseudo T=3 symmetry with capsid proteins VP2 and VP3. The capsid is 300 Angstroms in diameter, composed of 60 copies of each capsid protein and enclosing the viral positive strand RNA genome. Lies on the inner surface of the capsid shell. After binding to the host receptor, the capsid undergoes conformational changes. Capsid protein VP4 is released, Capsid protein VP1 N-terminus is externalized, and together, they shape a pore in the host membrane through which the viral genome is translocated into the host cell cytoplasm. Functionally, component of immature procapsids, which is cleaved into capsid proteins VP4 and VP2 after maturation. Allows the capsid to remain inactive before the maturation step. In terms of biological role, cysteine protease that cleaves viral polyprotein and specific host proteins. It is responsible for the autocatalytic cleavage between the P1 and P2 regions, which is the first cleavage occurring in the polyprotein. Also cleaves the host translation initiation factor EIF4G1, in order to shut down the capped cellular mRNA translation. Inhibits the host nucleus-cytoplasm protein and RNA trafficking by cleaving host members of the nuclear pores. Counteracts stress granule formation probably by antagonizing its assembly or promoting its dissassembly. Its function is as follows. Plays an essential role in the virus replication cycle by acting as a viroporin. Creates a pore in the host endoplasmic reticulum and as a consequence releases Ca2+ in the cytoplasm of infected cell. In turn, high levels of cytoplasmic calcium may trigger membrane trafficking and transport of viral ER-associated proteins to viroplasms, sites of viral genome replication. Induces and associates with structural rearrangements of intracellular membranes. Displays RNA-binding, nucleotide binding and NTPase activities. May play a role in virion morphogenesis and viral RNA encapsidation by interacting with the capsid protein VP3. Functionally, localizes the viral replication complex to the surface of membranous vesicles. Together with protein 3CD binds the Cis-Active RNA Element (CRE) which is involved in RNA synthesis initiation. Acts as a cofactor to stimulate the activity of 3D polymerase, maybe through a nucleid acid chaperone activity. In terms of biological role, localizes the viral replication complex to the surface of membranous vesicles. It inhibits host cell endoplasmic reticulum-to-Golgi apparatus transport and causes the disassembly of the Golgi complex, possibly through GBF1 interaction. This would result in depletion of MHC, trail receptors and IFN receptors at the host cell surface. Plays an essential role in viral RNA replication by recruiting ACBD3 and PI4KB at the viral replication sites, thereby allowing the formation of the rearranged membranous structures where viral replication takes place. Its function is as follows. Acts as a primer for viral RNA replication and remains covalently bound to viral genomic RNA. VPg is uridylylated prior to priming replication into VPg-pUpU. The oriI viral genomic sequence may act as a template for this. The VPg-pUpU is then used as primer on the genomic RNA poly(A) by the RNA-dependent RNA polymerase to replicate the viral genome. During genome replication, the VPg-RNA linkage is removed by the host TDP2, thereby accelerating replication. During the late stage of the replication cycle, host TDP2 is excluded from sites of viral RNA synthesis and encapsidation, allowing for the generation of progeny virions. Involved in the viral replication complex and viral polypeptide maturation. It exhibits protease activity with a specificity and catalytic efficiency that is different from protease 3C. Protein 3CD lacks polymerase activity. Protein 3CD binds to the 5'UTR of the viral genome. Functionally, replicates the viral genomic RNA on the surface of intracellular membranes. May form linear arrays of subunits that propagate along a strong head-to-tail interaction called interface-I. Covalently attaches UMP to a tyrosine of VPg, which is used to prime RNA synthesis. The positive stranded RNA genome is first replicated at virus induced membranous vesicles, creating a dsRNA genomic replication form. This dsRNA is then used as template to synthesize positive stranded RNA genomes. ss(+)RNA genomes are either translated, replicated or encapsidated. In terms of biological role, major viral protease that mediates proteolytic processing of the polyprotein. Cleaves host EIF5B, contributing to host translation shutoff. Also cleaves host PABPC1, contributing to host translation shutoff. Cleaves host NLRP1, triggers host N-glycine-mediated degradation of the autoinhibitory NLRP1 N-terminal fragment. This chain is Genome polyprotein, found in Homo sapiens (Human).